We begin with the raw amino-acid sequence, 382 residues long: F-box/kelch-repeat protein KIB1 (382 aa).

Residues 22-69 (SKHSILAVDLVRLILERLSFVDFHRARCVSSIWYIASKTVIGVTNPTT) enclose the F-box domain. 3 Kelch repeats span residues 73 to 117 (ILFP…ASSG), 159 to 209 (VLWV…FKEN), and 259 to 306 (IVAK…ITVE).

In terms of assembly, part of a SCF (SKP1-cullin-F-box) protein ligase complex. Binds directly to several GSK3 family proteins such as SKP1A/ASK1, ASK1/SK11, ASK3/SK12, ASK5/SK13, ASK7/BIN2/SK21, ASK9/SK22 and ASK6/SK23. Interacts with ASK7/BIN2/SK21 in a brassinosteroid (BR)-dependent manner. In terms of tissue distribution, expressed in seedlings, leaves, stems, flower buds and flowers.

The protein localises to the cytoplasm. Its subcellular location is the nucleus. It is found in the nucleolus. In terms of biological role, component of SCF(ASK-cullin-F-box) E3 ubiquitin ligase complexes, which may mediate the ubiquitination and subsequent proteasomal degradation of target proteins. Required for brassinosteroid (BR) signal transduction. Mediates ASK7/BIN2/SK21 inactivation both by competing with substrate binding (e.g. BZR1) and by promoting its ubiquitination and subsequent proteasomal degradation. The protein is F-box/kelch-repeat protein KIB1 of Arabidopsis thaliana (Mouse-ear cress).